Consider the following 240-residue polypeptide: Ubiquinone biosynthesis O-methyltransferase (240 aa).

4 residues coordinate S-adenosyl-L-methionine: Arg44, Gly64, Asp85, and Met129.

It belongs to the methyltransferase superfamily. UbiG/COQ3 family.

The enzyme catalyses a 3-demethylubiquinol + S-adenosyl-L-methionine = a ubiquinol + S-adenosyl-L-homocysteine + H(+). It carries out the reaction a 3-(all-trans-polyprenyl)benzene-1,2-diol + S-adenosyl-L-methionine = a 2-methoxy-6-(all-trans-polyprenyl)phenol + S-adenosyl-L-homocysteine + H(+). It participates in cofactor biosynthesis; ubiquinone biosynthesis. Functionally, O-methyltransferase that catalyzes the 2 O-methylation steps in the ubiquinone biosynthetic pathway. In Escherichia coli O6:K15:H31 (strain 536 / UPEC), this protein is Ubiquinone biosynthesis O-methyltransferase.